Here is a 308-residue protein sequence, read N- to C-terminus: Methionyl-tRNA formyltransferase (308 aa).

109-112 (SLLP) serves as a coordination point for (6S)-5,6,7,8-tetrahydrofolate.

This sequence belongs to the Fmt family.

It carries out the reaction L-methionyl-tRNA(fMet) + (6R)-10-formyltetrahydrofolate = N-formyl-L-methionyl-tRNA(fMet) + (6S)-5,6,7,8-tetrahydrofolate + H(+). In terms of biological role, attaches a formyl group to the free amino group of methionyl-tRNA(fMet). The formyl group appears to play a dual role in the initiator identity of N-formylmethionyl-tRNA by promoting its recognition by IF2 and preventing the misappropriation of this tRNA by the elongation apparatus. In Methylobacillus flagellatus (strain ATCC 51484 / DSM 6875 / VKM B-1610 / KT), this protein is Methionyl-tRNA formyltransferase.